A 282-amino-acid polypeptide reads, in one-letter code: Energy-coupling factor transporter ATP-binding protein EcfA1 (282 aa).

In terms of domain architecture, ABC transporter spans 6–243; it reads ISFDHVTFTY…VEMLKRIGLD (238 aa). An ATP-binding site is contributed by 40 to 47; the sequence is GHNGSGKS.

Belongs to the ABC transporter superfamily. Energy-coupling factor EcfA family. Forms a stable energy-coupling factor (ECF) transporter complex composed of 2 membrane-embedded substrate-binding proteins (S component), 2 ATP-binding proteins (A component) and 2 transmembrane proteins (T component).

It is found in the cell membrane. ATP-binding (A) component of a common energy-coupling factor (ECF) ABC-transporter complex. Unlike classic ABC transporters this ECF transporter provides the energy necessary to transport a number of different substrates. The sequence is that of Energy-coupling factor transporter ATP-binding protein EcfA1 from Lactobacillus delbrueckii subsp. bulgaricus (strain ATCC BAA-365 / Lb-18).